The primary structure comprises 167 residues: Putative peroxiredoxin-A (167 aa).

Positions Ile4–Leu167 constitute a Thioredoxin domain. Cys53 acts as the Cysteine sulfenic acid (-SOH) intermediate in catalysis. Residues Ala165–Leu167 carry the Microbody targeting signal motif.

The protein belongs to the peroxiredoxin family. Prx5 subfamily.

The protein resides in the peroxisome membrane. The enzyme catalyses a hydroperoxide + [thioredoxin]-dithiol = an alcohol + [thioredoxin]-disulfide + H2O. In terms of biological role, thiol-specific peroxidase that catalyzes the reduction of hydrogen peroxide and organic hydroperoxides to water and alcohols, respectively. Plays a role in cell protection against oxidative stress by detoxifying peroxides and as sensor of hydrogen peroxide-mediated signaling events. The polypeptide is Putative peroxiredoxin-A (PMPA) (Candida boidinii (Yeast)).